We begin with the raw amino-acid sequence, 246 residues long: E3 ubiquitin-protein ligase LubX (246 aa).

U-box domains follow at residues 36–109 (TTPT…QTNY) and 131–204 (EIPD…RKRE).

Interacts with host CLK1. Ubiquitinated in the presence of host E1 ubiquitin-activating enzyme, E2 ubiquitin-conjugating enzyme (UBE2D1 or UBE2D3) and ubiquitin.

The protein localises to the secreted. It localises to the host cell. It carries out the reaction S-ubiquitinyl-[E2 ubiquitin-conjugating enzyme]-L-cysteine + [acceptor protein]-L-lysine = [E2 ubiquitin-conjugating enzyme]-L-cysteine + N(6)-ubiquitinyl-[acceptor protein]-L-lysine.. Functionally, effector proteins function to alter host cell physiology and promote bacterial survival in host tissues. This protein is an E3 ubiquitin ligase that interferes with host's ubiquitination pathway. Acts in conjunction with host E2 ubiquitin-conjugating enzymes UBE2D1 (UBCH5A) or UBE2D3 (UBCH5C), and mediates polyubiquitination of host kinase CLK1. The chain is E3 ubiquitin-protein ligase LubX (lubX) from Legionella pneumophila subsp. pneumophila (strain Philadelphia 1 / ATCC 33152 / DSM 7513).